The sequence spans 553 residues: Arginine--tRNA ligase (553 aa).

The short motif at 130 to 140 (ANPTGDLHIGH) is the 'HIGH' region element.

It belongs to the class-I aminoacyl-tRNA synthetase family. Monomer.

The protein localises to the cytoplasm. It catalyses the reaction tRNA(Arg) + L-arginine + ATP = L-arginyl-tRNA(Arg) + AMP + diphosphate. The chain is Arginine--tRNA ligase from Staphylococcus aureus (strain USA300 / TCH1516).